The following is a 366-amino-acid chain: Cyclin-O protein A (366 aa).

Disordered stretches follow at residues 18-55 and 80-99; these read AAFSSGKRKRDSGYSPGDATPGDRGEGGPDWPSAGIKK and YETPSPSPVAPTPTNEPYDS.

The protein belongs to the cyclin family.

The protein localises to the cytoplasm. In terms of biological role, specifically required for generation of multiciliated cells, possibly by promoting a cell cycle state compatible with centriole amplification and maturation. Acts downstream of mcidas to promote mother centriole amplification and maturation in preparation for apical docking. The polypeptide is Cyclin-O protein A (ccno-a) (Xenopus laevis (African clawed frog)).